The following is a 173-amino-acid chain: MSILEILYYPDKRLRTIADPVVAVSDDTNQIINDMFDTMYFKKGIGLAATQVNIHQQIIVIDLYKKNKQRLVFINPSITKKTGIISIPESCLSIPQIYEIVPRSEKITIQSLDQYGNKFEMEANNLLAICIQHEVDHLFGKLFIDHLSPLKIKKIHKKIKKLSKTFKKNQFPL.

Fe cation is bound by residues cysteine 91 and histidine 133. Glutamate 134 is a catalytic residue. Residue histidine 137 participates in Fe cation binding.

It belongs to the polypeptide deformylase family. It depends on Fe(2+) as a cofactor.

The catalysed reaction is N-terminal N-formyl-L-methionyl-[peptide] + H2O = N-terminal L-methionyl-[peptide] + formate. In terms of biological role, removes the formyl group from the N-terminal Met of newly synthesized proteins. Requires at least a dipeptide for an efficient rate of reaction. N-terminal L-methionine is a prerequisite for activity but the enzyme has broad specificity at other positions. The protein is Peptide deformylase of Blochmanniella pennsylvanica (strain BPEN).